The following is a 298-amino-acid chain: Inosose dehydratase (298 aa).

Belongs to the IolE/MocC family. Requires glutathione as cofactor. The cofactor is Co(2+). Mn(2+) is required as a cofactor.

It catalyses the reaction scyllo-inosose = 3D-3,5/4-trihydroxycyclohexane-1,2-dione + H2O. Functionally, catalyzes the dehydration of inosose (2-keto-myo-inositol, 2KMI or 2,4,6/3,5-pentahydroxycyclohexanone) to 3D-(3,5/4)-trihydroxycyclohexane-1,2-dione (D-2,3-diketo-4-deoxy-epi-inositol). This Erwinia tasmaniensis (strain DSM 17950 / CFBP 7177 / CIP 109463 / NCPPB 4357 / Et1/99) protein is Inosose dehydratase.